Here is an 82-residue protein sequence, read N- to C-terminus: UPF0213 protein SERP0126 (82 aa).

Positions 2-77 (DKHFVYIVKC…KTYTRQQKLK (76 aa)) constitute a GIY-YIG domain.

The protein belongs to the UPF0213 family.

This chain is UPF0213 protein SERP0126, found in Staphylococcus epidermidis (strain ATCC 35984 / DSM 28319 / BCRC 17069 / CCUG 31568 / BM 3577 / RP62A).